A 711-amino-acid chain; its full sequence is Ribosomal RNA large subunit methyltransferase K/L (711 aa).

A THUMP domain is found at 43–154 (LGYRITLWSR…RGQITIGLNF (112 aa)).

It belongs to the methyltransferase superfamily. RlmKL family.

It localises to the cytoplasm. The catalysed reaction is guanosine(2445) in 23S rRNA + S-adenosyl-L-methionine = N(2)-methylguanosine(2445) in 23S rRNA + S-adenosyl-L-homocysteine + H(+). It carries out the reaction guanosine(2069) in 23S rRNA + S-adenosyl-L-methionine = N(2)-methylguanosine(2069) in 23S rRNA + S-adenosyl-L-homocysteine + H(+). Its function is as follows. Specifically methylates the guanine in position 2445 (m2G2445) and the guanine in position 2069 (m7G2069) of 23S rRNA. The chain is Ribosomal RNA large subunit methyltransferase K/L from Shewanella woodyi (strain ATCC 51908 / MS32).